The chain runs to 181 residues: MGNIFANLFKGLFGKKEMRILMVGLDAAGKTTILYKLKLGEIVTTIPTIGFNVETVEYKNISFTVWDVGGQDKIRPLWRHYFQNTQGLIFVVDSNDRERVNEAREELMRMLAEDELRDAVLLVFANKQDLPNAMNAAEITDKLGLHSLRHRNWYIQATCATSGDGLYEGLDWLSNQLRNQK.

The residue at position 2 (G2) is an N-acetylglycine; alternate. A lipid anchor (N-myristoyl glycine; alternate) is attached at G2. The interval 3-16 (NIFANLFKGLFGKK) is important for the stable binding to the membranes. GTP is bound by residues 24 to 32 (GLDAAGKTT), 126 to 129 (NKQD), and A160.

Belongs to the small GTPase superfamily. Arf family. Interacts (when activated) with GGA1, GGA2 and GGA3; the interaction is required for proper subcellular location of GGA1, GGA2 and GGA3. Interacts with ARHGAP21, ASAP2, GGA1, HERC1, PRKCABP, PIP5K1B, TMED2, PSCD2, TMED10 and GRIA2. Interacts with ARFGAP1, which hydrolyzes GTP and thus, regulates its function. Interacts with PI4KB in the Golgi complex. Interacts with NCS1/FREQ in the Golgi and at the plasma membrane. Interacts with PLEKHA3. Interacts with PLEKHA8; the interaction, together with phosphatidylinositol 4-phosphate binding, is required for FAPP2-mediated glucosylceramide transfer activity. Interacts (activated) with PICK1 (via PDZ domain); the interaction blocks Arp2/3 complex inhibition. Interacts with IQSEC1. Interacts with C9orf72.

It localises to the golgi apparatus membrane. It is found in the synapse. The protein localises to the synaptosome. The protein resides in the postsynaptic density. The enzyme catalyses GTP + H2O = GDP + phosphate + H(+). Its activity is regulated as follows. Alternates between an inactive GDP-bound form and an active GTP-bound form. Activated by guanine nucleotide-exchange factors (GEFs) and inactivated by GTPase-activating proteins (GAPs). Its function is as follows. Small GTPase involved in protein trafficking between different compartments. Modulates vesicle budding and uncoating within the Golgi complex. In its GTP-bound form, triggers the recruitment of coatomer proteins to the Golgi membrane. The hydrolysis of ARF1-bound GTP, which is mediated by ARFGAPs proteins, is required for dissociation of coat proteins from Golgi membranes and vesicles. The GTP-bound form interacts with PICK1 to limit PICK1-mediated inhibition of Arp2/3 complex activity; the function is linked to AMPA receptor (AMPAR) trafficking, regulation of synaptic plasticity of excitatory synapses and spine shrinkage during long-term depression (LTD). Plays a key role in the regulation of intestinal stem cells and gut microbiota, and is essential for maintaining intestinal homeostasis. Also plays a critical role in mast cell expansion but not in mast cell maturation by facilitating optimal mTORC1 activation. The protein is ADP-ribosylation factor 1 (ARF1) of Bos taurus (Bovine).